Consider the following 60-residue polypeptide: Large ribosomal subunit protein bL32 (60 aa).

The interval 1 to 28 (MAVQQNKKSRSARDMRRSHDALEASTLS) is disordered. Basic and acidic residues predominate over residues 11 to 22 (SARDMRRSHDAL).

The protein belongs to the bacterial ribosomal protein bL32 family.

The chain is Large ribosomal subunit protein bL32 from Pseudomonas savastanoi pv. phaseolicola (strain 1448A / Race 6) (Pseudomonas syringae pv. phaseolicola (strain 1448A / Race 6)).